A 318-amino-acid polypeptide reads, in one-letter code: Transcription factor zip-4 (318 aa).

Positions 1–13 (MYNYNYSRGNKSM) are enriched in polar residues. Disordered regions lie at residues 1 to 20 (MYNY…PRFH), 147 to 205 (EKKP…TAAA), 238 to 257 (NNDA…LQKD), and 273 to 318 (ELQS…KSNY). Residues 173–190 (DYQEEGETSLSDNDESVD) show a composition bias toward acidic residues. In terms of domain architecture, bZIP spans 228–291 (EPIYKLKRAR…ERDQQLIKQL (64 aa)). A basic motif region spans residues 232–266 (KLKRARNNDAVRKSRNKAKELQLQKDEEYDEMKKR). A coiled-coil region spans residues 242-280 (VRKSRNKAKELQLQKDEEYDEMKKRITQLEAELQSEREG). A leucine-zipper region spans residues 267–274 (ITQLEAEL). Residues 275–298 (QSEREGRERDQQLIKQLIREKEST) show a composition bias toward basic and acidic residues. The span at 307–318 (RNALESFNKSNY) shows a compositional bias: polar residues.

It belongs to the bZIP family. C/EBP subfamily.

It localises to the nucleus. Functionally, transcription factor that binds to the promoter and the enhancer regions of target genes. Involved in responding to mitochondrial damage. Has a protective role in response to infection by the Gram-negative bacterium P.aeruginosa. The chain is Transcription factor zip-4 from Caenorhabditis elegans.